Consider the following 219-residue polypeptide: KP6 killer toxin (219 aa).

The first 19 residues, 1 to 19 (MLIFSVLMYLGLLLAGASA), serve as a signal peptide directing secretion. A propeptide spanning residues 20-27 (LPNGLSPR) is cleaved from the precursor. Intrachain disulfides connect cysteine 32/cysteine 39, cysteine 43/cysteine 101, cysteine 45/cysteine 92, and cysteine 62/cysteine 78. Asparagine 98 carries an N-linked (GlcNAc...) asparagine; by host glycan. The propeptide occupies 106–138 (KRTIQDSATDTVDLGAELHRDDPPPTASDIGKR). The segment at 120–142 (GAELHRDDPPPTASDIGKRGKRP) is disordered.

Heterodimer of two small polypeptides that are not covalently linked.

Its subcellular location is the secreted. In terms of biological role, this protein is lethal to sensitive cells of the same or related species. The KP6 alpha subunit is known to recognize some cellular receptors before interaction of the complex with KP6 beta, precipitating cell death. The chain is KP6 killer toxin from Ustilago maydis P6 virus (UmV6).